A 206-amino-acid chain; its full sequence is Synaptosomal-associated protein 25 (206 aa).

A compositionally biased stretch (basic and acidic residues) spans 1–20 (MAEDADMRNELEEMQRRADQ). The disordered stretch occupies residues 1–25 (MAEDADMRNELEEMQRRADQLADES). An interaction with CENPF region spans residues 1-75 (MAEDADMRNE…QINKDMKEAE (75 aa)). Residues 19–81 (DQLADESLES…KEAEKNSTDL (63 aa)) enclose the t-SNARE coiled-coil homology 1 domain. Residues Cys-85, Cys-88, Cys-90, and Cys-92 are each lipidated (S-palmitoyl cysteine). Residues 111–120 (GVVASQPARV) are interaction with ZDHHC17. At Thr-138 the chain carries Phosphothreonine. The t-SNARE coiled-coil homology 2 domain occupies 140–202 (DARENEMDEN…DEANQRATKM (63 aa)). Ser-154 and Ser-187 each carry phosphoserine.

The protein belongs to the SNAP-25 family. As to quaternary structure, part of the SNARE core complex containing SNAP25, VAMP2 and STX1A; this complex binds CPLX1. Found in a complex containing SYT1, SV2B and syntaxin-1. Found in a ternary complex with STX1A and VAMP8. Interacts with HSC70 and with SYT9, forming a complex with DNAJC5. The interaction with SYT9 is inhibited in presence of calcium. Isoform 1 and isoform 2 interact with BLOC1S6. Interacts with CENPF. Interacts with EQTN. Interacts with HGS. Interacts with KCNB1 (via N-terminus); reduces the voltage-dependent potassium channel KCNB1 activity in pancreatic beta cells. Interacts with OTOF. Interacts with RIMS1. Interacts with SNAPIN. Interacts with STXBP6. Interacts with TRIM9. Interacts with ZDHHC13 (via ANK repeats). Interacts with ZDHHC17 (via ANK repeats). Associates with the BLOC-1 complex. Interacts with PLCL1 (via C2 domain). Interacts with PRRT2; this interaction may impair the formation of the SNARE complex. Interacts with alpha-synuclein/SNCA. Interacts with PRPH2. Interacts with ROM1. Interacts with STX3. In terms of processing, palmitoylated. Cys-85 appears to be the main site, and palmitoylation is required for membrane association.

The protein resides in the cytoplasm. The protein localises to the perinuclear region. Its subcellular location is the cell membrane. It is found in the synapse. It localises to the synaptosome. The protein resides in the photoreceptor inner segment. Functionally, t-SNARE involved in the molecular regulation of neurotransmitter release. May play an important role in the synaptic function of specific neuronal systems. Associates with proteins involved in vesicle docking and membrane fusion. Regulates plasma membrane recycling through its interaction with CENPF. Modulates the gating characteristics of the delayed rectifier voltage-dependent potassium channel KCNB1 in pancreatic beta cells. The sequence is that of Synaptosomal-associated protein 25 (SNAP25) from Pongo abelii (Sumatran orangutan).